The chain runs to 612 residues: Dihydroxy-acid dehydratase (612 aa).

A Mg(2+)-binding site is contributed by aspartate 81. Cysteine 122 provides a ligand contact to [2Fe-2S] cluster. Mg(2+)-binding residues include aspartate 123 and lysine 124. Lysine 124 bears the N6-carboxylysine mark. Cysteine 193 lines the [2Fe-2S] cluster pocket. Residue glutamate 489 participates in Mg(2+) binding. Serine 515 acts as the Proton acceptor in catalysis.

It belongs to the IlvD/Edd family. In terms of assembly, homodimer. Requires [2Fe-2S] cluster as cofactor. The cofactor is Mg(2+).

The catalysed reaction is (2R)-2,3-dihydroxy-3-methylbutanoate = 3-methyl-2-oxobutanoate + H2O. It carries out the reaction (2R,3R)-2,3-dihydroxy-3-methylpentanoate = (S)-3-methyl-2-oxopentanoate + H2O. It functions in the pathway amino-acid biosynthesis; L-isoleucine biosynthesis; L-isoleucine from 2-oxobutanoate: step 3/4. It participates in amino-acid biosynthesis; L-valine biosynthesis; L-valine from pyruvate: step 3/4. Functionally, functions in the biosynthesis of branched-chain amino acids. Catalyzes the dehydration of (2R,3R)-2,3-dihydroxy-3-methylpentanoate (2,3-dihydroxy-3-methylvalerate) into 2-oxo-3-methylpentanoate (2-oxo-3-methylvalerate) and of (2R)-2,3-dihydroxy-3-methylbutanoate (2,3-dihydroxyisovalerate) into 2-oxo-3-methylbutanoate (2-oxoisovalerate), the penultimate precursor to L-isoleucine and L-valine, respectively. This Stenotrophomonas maltophilia (strain R551-3) protein is Dihydroxy-acid dehydratase.